Reading from the N-terminus, the 230-residue chain is Cytochrome c oxidase subunit 2 (230 aa).

Topologically, residues 1-26 (MATPAQLGLMDAASPVMEEMIYFHDH) are mitochondrial intermembrane. A helical membrane pass occupies residues 27-48 (VMLVLILITCLIFYSMLVLISS). Residues 49-62 (KYIYRFLTDGHVIE) are Mitochondrial matrix-facing. Residues 63-82 (TVWTVIPAIILVVVALPSLK) traverse the membrane as a helical segment. Over 83 to 230 (LLYLTDELDN…GWCDMMLDEE (148 aa)) the chain is Mitochondrial intermembrane. The Cu cation site is built by His-161, Cys-196, Glu-198, Cys-200, His-204, and Met-207. A Mg(2+)-binding site is contributed by Glu-198.

Belongs to the cytochrome c oxidase subunit 2 family. As to quaternary structure, component of the cytochrome c oxidase (complex IV, CIV), a multisubunit enzyme composed of a catalytic core of 3 subunits and several supernumerary subunits. The complex exists as a monomer or a dimer and forms supercomplexes (SCs) in the inner mitochondrial membrane with ubiquinol-cytochrome c oxidoreductase (cytochrome b-c1 complex, complex III, CIII). The cofactor is Cu cation.

It localises to the mitochondrion inner membrane. The enzyme catalyses 4 Fe(II)-[cytochrome c] + O2 + 8 H(+)(in) = 4 Fe(III)-[cytochrome c] + 2 H2O + 4 H(+)(out). In terms of biological role, component of the cytochrome c oxidase, the last enzyme in the mitochondrial electron transport chain which drives oxidative phosphorylation. The respiratory chain contains 3 multisubunit complexes succinate dehydrogenase (complex II, CII), ubiquinol-cytochrome c oxidoreductase (cytochrome b-c1 complex, complex III, CIII) and cytochrome c oxidase (complex IV, CIV), that cooperate to transfer electrons derived from NADH and succinate to molecular oxygen, creating an electrochemical gradient over the inner membrane that drives transmembrane transport and the ATP synthase. Cytochrome c oxidase is the component of the respiratory chain that catalyzes the reduction of oxygen to water. Electrons originating from reduced cytochrome c in the intermembrane space (IMS) are transferred via the dinuclear copper A center (CU(A)) of subunit 2 and heme A of subunit 1 to the active site in subunit 1, a binuclear center (BNC) formed by heme A3 and copper B (CU(B)). The BNC reduces molecular oxygen to 2 water molecules using 4 electrons from cytochrome c in the IMS and 4 protons from the mitochondrial matrix. The protein is Cytochrome c oxidase subunit 2 (COII) of Branchiostoma floridae (Florida lancelet).